A 310-amino-acid polypeptide reads, in one-letter code: S-methyl-5'-thioadenosine phosphorylase (310 aa).

Phosphate contacts are provided by residues Thr-20, 62–63 (RH), and 95–96 (SA). Residue Met-197 coordinates substrate. Position 198 (Ser-198) interacts with phosphate. Residue 221 to 223 (DYD) participates in substrate binding.

Belongs to the PNP/MTAP phosphorylase family. MTAP subfamily. In terms of assembly, homotrimer.

It localises to the cytoplasm. Its subcellular location is the nucleus. The catalysed reaction is S-methyl-5'-thioadenosine + phosphate = 5-(methylsulfanyl)-alpha-D-ribose 1-phosphate + adenine. The protein operates within amino-acid biosynthesis; L-methionine biosynthesis via salvage pathway; S-methyl-5-thio-alpha-D-ribose 1-phosphate from S-methyl-5'-thioadenosine (phosphorylase route): step 1/1. Its function is as follows. Catalyzes the reversible phosphorylation of S-methyl-5'-thioadenosine (MTA) to adenine and 5-methylthioribose-1-phosphate. Involved in the breakdown of MTA, a major by-product of polyamine biosynthesis. Responsible for the first step in the methionine salvage pathway after MTA has been generated from S-adenosylmethionine. Has broad substrate specificity with 6-aminopurine nucleosides as preferred substrates. The polypeptide is S-methyl-5'-thioadenosine phosphorylase (Neurospora crassa (strain ATCC 24698 / 74-OR23-1A / CBS 708.71 / DSM 1257 / FGSC 987)).